We begin with the raw amino-acid sequence, 393 residues long: MNVPATREDLMIVNMGPHHPSMHGVLRLIVTLDGEDVIDCEPILGYLHRGMEKIAENRTIIQYLPYVTRWDYLATMFTEAITVNAPEQLGNIQVPKRASYIRVIMLELSRIASHLLWLGPFMADIGAQTPFFYIFRERELVYDLFEAATGMRMMHNYFRIGGVAADLPHGWIDKCLDFCDYFLTGVAEYQKLITRNPIFLERVEGVGIIGVEEAINWGLSGPMLRASGIQWDLRKVDHYECYDEFDWEVQWQKEGDSLSRYLVRIGEMVASIKIIQQALEGIPGGPYENLEIRCFDRARDPELNDFEYRFISKKPSPTFELSKQELYVRVEAPKGELGIFLIGDQNVFPWRWKIRPPGFINLQILPQLVKRMKLADIMTILGSIDIIMGEVDR.

The protein belongs to the complex I 49 kDa subunit family. In terms of assembly, NDH is composed of at least 16 different subunits, 5 of which are encoded in the nucleus.

It localises to the plastid. It is found in the chloroplast thylakoid membrane. The enzyme catalyses a plastoquinone + NADH + (n+1) H(+)(in) = a plastoquinol + NAD(+) + n H(+)(out). It carries out the reaction a plastoquinone + NADPH + (n+1) H(+)(in) = a plastoquinol + NADP(+) + n H(+)(out). Its function is as follows. NDH shuttles electrons from NAD(P)H:plastoquinone, via FMN and iron-sulfur (Fe-S) centers, to quinones in the photosynthetic chain and possibly in a chloroplast respiratory chain. The immediate electron acceptor for the enzyme in this species is believed to be plastoquinone. Couples the redox reaction to proton translocation, and thus conserves the redox energy in a proton gradient. The sequence is that of NAD(P)H-quinone oxidoreductase subunit H, chloroplastic from Vitis vinifera (Grape).